Here is a 755-residue protein sequence, read N- to C-terminus: MGRGTLALGWAGAALLLLQMLAAAERSPRTPGGKAGVFADLSAQELKAVHSFLWSQKELKLEPSGTLTMAKNSVFLIEMLLPKKQHVLKFLDKGHRRPVREARAVIFFGAQEQPNVTEFAVGPLPTPRYMRDLPPRPGHQVSWASRPISKAEYALLSHKLQEATQPLRQFFRRTTGSSFGDCHEQCLTFTDVAPRGLASGQRRTWFILQRQMPGYFLHPTGLELLVDHGSTNAQDWTVEQVWYNGKFYRSPEELAQKYNDGEVDVVILEDPLAKGKDGESLPEPALFSFYQPRGDFAVTMHGPHVVQPQGPRYSLEGNRVMYGGWSFAFRLRSSSGLQILDVHFGGERIAYEVSVQEAVALYGGHTPAGMQTKYIDVGWGLGSVTHELAPDIDCPETATFLDALHHYDADGPVLYPRALCLFEMPTGVPLRRHFNSNFSGGFNFYAGLKGQVLVLRTTSTVYNYDYIWDFIFYPNGVMEAKMHATGYVHATFYTPEGLRYGTRLHTHLIGNMHTHLVNYRVDLDVAGTTNSFQTLQMELENITNPWSPRHRLVQPTLKQTRYSRERQAAFRFGQPLPKYLLITSPKENPWGHTRSYRLQLHSMADQVLPPGWQEERAVTWARYPLAVTRYRESELSSSSIYNQNDPWDPPVVFEEFLRNNENIEDEDLVAWVTVGFLHIPHSEDIPNTATPGNSVGFLLRPFNFFPEDPALASRDLVVVWPLENGSTYAQRWIPEEDQSCLKPPPFSYNGSYRPV.

A signal peptide spans 1–24; sequence MGRGTLALGWAGAALLLLQMLAAA. An N-linked (GlcNAc...) asparagine glycan is attached at Asn115. Cys182 and Cys186 are oxidised to a cystine. The active-site Proton acceptor is Asp376. A disulfide bridge links Cys394 with Cys420. The active-site Schiff-base intermediate with substrate; via topaquinone is the Tyr464. 2',4',5'-topaquinone is present on Tyr464. Cu(2+) contacts are provided by His513 and His515. The Ca(2+) site is built by Asp522, Leu523, and Asp524. An N-linked (GlcNAc...) asparagine glycan is attached at Asn541. Residues Glu565, Phe656, Asn659, Glu661, Asp667, and Leu668 each contribute to the Ca(2+) site. Position 678 (His678) interacts with Cu(2+). Asn749 carries N-linked (GlcNAc...) asparagine glycosylation.

It belongs to the copper/topaquinone oxidase family. Homodimer; disulfide-linked. Cu(2+) serves as cofactor. The cofactor is Ca(2+). L-topaquinone is required as a cofactor. Post-translationally, topaquinone (TPQ) is generated by copper-dependent autoxidation of a specific tyrosyl residue. N-glycosylated; the glycans are primarily linear, di-, or tribranched fucosylated complex type.

The protein resides in the secreted. The protein localises to the extracellular space. It is found in the cell membrane. It carries out the reaction histamine + O2 + H2O = imidazole-4-acetaldehyde + H2O2 + NH4(+). It catalyses the reaction N(tau)-methylhistamine + O2 + H2O = 1-methylimidazole-4-acetaldehyde + H2O2 + NH4(+). The catalysed reaction is putrescine + O2 + H2O = 4-aminobutanal + H2O2 + NH4(+). The enzyme catalyses cadaverine + O2 + H2O = 5-aminopentanal + H2O2 + NH4(+). With respect to regulation, inhibited by amiloride and amiloride analogs. Its function is as follows. Catalyzes the oxidative deamination of primary amines to the corresponding aldehydes with the concomitant production of hydrogen peroxide and ammonia. Its preferred substrates in vitro are the diamines histamine and 1-methylhistamine and it could therefore play a role in allergic and immune responses. Has a broad specificity for diamines and can also act on cadaverine and putrescine, two products of amino acid catabolism. It could also act on polyamines, like spermidine and spermine though less efficiently, and regulate various biological processes. The polypeptide is Diamine oxidase [copper-containing] (Sus scrofa (Pig)).